We begin with the raw amino-acid sequence, 445 residues long: Tubulin beta-5 chain (445 aa).

Gln-11, Glu-69, Ser-138, Gly-142, Thr-143, Gly-144, Asn-204, and Asn-226 together coordinate GTP. Glu-69 contacts Mg(2+). The interval 420–445 (AEYQQYQDATADDEYEEGEEEEEEAA) is disordered. The span at 429–445 (TADDEYEEGEEEEEEAA) shows a compositional bias: acidic residues.

This sequence belongs to the tubulin family. As to quaternary structure, dimer of alpha and beta chains. A typical microtubule is a hollow water-filled tube with an outer diameter of 25 nm and an inner diameter of 15 nM. Alpha-beta heterodimers associate head-to-tail to form protofilaments running lengthwise along the microtubule wall with the beta-tubulin subunit facing the microtubule plus end conferring a structural polarity. Microtubules usually have 13 protofilaments but different protofilament numbers can be found in some organisms and specialized cells. Requires Mg(2+) as cofactor.

The protein localises to the cytoplasm. The protein resides in the cytoskeleton. Tubulin is the major constituent of microtubules, a cylinder consisting of laterally associated linear protofilaments composed of alpha- and beta-tubulin heterodimers. Microtubules grow by the addition of GTP-tubulin dimers to the microtubule end, where a stabilizing cap forms. Below the cap, tubulin dimers are in GDP-bound state, owing to GTPase activity of alpha-tubulin. This chain is Tubulin beta-5 chain, found in Gossypium hirsutum (Upland cotton).